Reading from the N-terminus, the 1375-residue chain is DNA-directed RNA polymerase subunit beta' (1375 aa).

Residues C70, C72, C85, and C88 each coordinate Zn(2+). Residues D461, D463, and D465 each coordinate Mg(2+). The Zn(2+) site is built by C797, C871, C878, and C881.

Belongs to the RNA polymerase beta' chain family. As to quaternary structure, the RNAP catalytic core consists of 2 alpha, 1 beta, 1 beta' and 1 omega subunit. When a sigma factor is associated with the core the holoenzyme is formed, which can initiate transcription. Mg(2+) serves as cofactor. Zn(2+) is required as a cofactor.

It carries out the reaction RNA(n) + a ribonucleoside 5'-triphosphate = RNA(n+1) + diphosphate. In terms of biological role, DNA-dependent RNA polymerase catalyzes the transcription of DNA into RNA using the four ribonucleoside triphosphates as substrates. The protein is DNA-directed RNA polymerase subunit beta' of Neorickettsia sennetsu (strain ATCC VR-367 / Miyayama) (Ehrlichia sennetsu).